The chain runs to 610 residues: Glutamine--fructose-6-phosphate aminotransferase [isomerizing] (610 aa).

The active-site Nucleophile; for GATase activity is Cys-2. A Glutamine amidotransferase type-2 domain is found at 2 to 221; sequence CGIVGAVAQR…DGDVVDLQLA (220 aa). SIS domains are found at residues 286-426 and 459-600; these read AYKV…TRGR and WADR…VDKP. The active-site For Fru-6P isomerization activity is Lys-605.

As to quaternary structure, homodimer.

It localises to the cytoplasm. It catalyses the reaction D-fructose 6-phosphate + L-glutamine = D-glucosamine 6-phosphate + L-glutamate. In terms of biological role, catalyzes the first step in hexosamine metabolism, converting fructose-6P into glucosamine-6P using glutamine as a nitrogen source. This is Glutamine--fructose-6-phosphate aminotransferase [isomerizing] from Bordetella bronchiseptica (strain ATCC BAA-588 / NCTC 13252 / RB50) (Alcaligenes bronchisepticus).